Here is an 888-residue protein sequence, read N- to C-terminus: MELSLSPKETEIRPNTIPDLKVDATFRKVAKHAITFAIWKIDEDRLEAVQRSHYGTFYDSCAYIIYAASLSGHYANHETITREQKPNVSLERYIHYWLGKNVSEQNRSNVVHKIQELDSYLGNISSIYRETQNLESARFLSYFKKGYDVRSGALISAPQRPRLFQLYARKWLRSIEVATIDWSHFNSDYVMVLQTDNLTYVWIGRSSSGIERRSALDWVQKHCSGSPITIVDDGYEQAMSQEHKELWNTMLPLKKRMVCQASQLVSEYADYNSNKFRIYKCNQRGRLHLDQLDVGMPAKDDLSDAHGVYLLDNYGQSIWLWVGGQAPQADALSAMGNGRAFVKKKKYPDNTLVVRVLEGHEPVEFKRLFANWLNVWQENTRGHKPVSTKFGKLDAHSLCERPKMAADTQLVDDGRGERVIYRVFGDQVQEVPISKTVVFTTNASFVVKYSVQCATVVPADLASVGIKTIIYQWNGSEASVESISRADKFAKASFDGLKEPGMFVQLYEFDEPPHFLQIFEGKLIIRRGQRTEMPYNGNSNALLDTFLLKVYGDASYNAKAVEETHLSSISSKDCYVIKTNHVWVWCGQSSTGDAREMAKAVGALMGENSLVLEGKESKEFWQSVAMYFNQTLVINGNGNSCSSSTSSSSGAGSMCNGSSNGGNISPTLSNNCYLNTSVPSKPRPPVQLFLVWWQQSSLRYEEILGFDQQDLSSDCTYILDTGSLTYVWLGSQAPNQERYTAIAQSYVQNAPFGRRSATALAVVRQFQEPNVFKGFFESWQNDYGKNFHSYEKMRKDLGNKVTSNCCFASEGSALILNNRQKDFDGHKKYPLTVLIQEMDMLPPDINPLKREVHLTHDDFVSVFNMSFYEFDELPKWKKMELKKQFKLF.

Residues 307-366 form a Gelsolin-like repeat; it reads GVYLLDNYGQSIWLWVGGQAPQADALSAMGNGRAFVKKKKYPDNTLVVRVLEGHEPVEFK. The HP domain occupies 823–888; the sequence is FDGHKKYPLT…MELKKQFKLF (66 aa).

Belongs to the villin/gelsolin family. Germline specific in adult flies.

In terms of biological role, required for the formation of cytoplasmic actin filament bundles in nurse cells, possibly by regulating both the polymerization and organization of actin filaments. Mutations in quail result in female sterility due to the disruption of cytoplasmic transport from the nurse cells into the oocyte late in oogenesis. The polypeptide is Villin-like protein quail (qua) (Drosophila melanogaster (Fruit fly)).